The chain runs to 734 residues: Ribosomal RNA large subunit methyltransferase K/L (734 aa).

A THUMP domain is found at 49–167 (HAYRICMWSR…KTEHTYCLDL (119 aa)).

Belongs to the methyltransferase superfamily. RlmKL family.

It localises to the cytoplasm. It carries out the reaction guanosine(2445) in 23S rRNA + S-adenosyl-L-methionine = N(2)-methylguanosine(2445) in 23S rRNA + S-adenosyl-L-homocysteine + H(+). The catalysed reaction is guanosine(2069) in 23S rRNA + S-adenosyl-L-methionine = N(2)-methylguanosine(2069) in 23S rRNA + S-adenosyl-L-homocysteine + H(+). Its function is as follows. Specifically methylates the guanine in position 2445 (m2G2445) and the guanine in position 2069 (m7G2069) of 23S rRNA. This chain is Ribosomal RNA large subunit methyltransferase K/L, found in Acinetobacter baumannii (strain SDF).